A 310-amino-acid chain; its full sequence is Putative S-adenosyl-L-methionine-dependent methyltransferase MMAR_0356 (310 aa).

S-adenosyl-L-methionine contacts are provided by residues aspartate 137 and 166–167 (DL).

The protein belongs to the UPF0677 family.

In terms of biological role, exhibits S-adenosyl-L-methionine-dependent methyltransferase activity. The protein is Putative S-adenosyl-L-methionine-dependent methyltransferase MMAR_0356 of Mycobacterium marinum (strain ATCC BAA-535 / M).